Here is a 336-residue protein sequence, read N- to C-terminus: Cell division protein ZipA (336 aa).

At 1–2 the chain is on the periplasmic side; sequence ME. A helical membrane pass occupies residues 3–23; it reads LHILFFILAGLLIAVLIGFSL. Residues 24-336 lie on the Cytoplasmic side of the membrane; it reads WSARREKSRI…SRQAYLARVS (313 aa).

The protein belongs to the ZipA family. As to quaternary structure, interacts with FtsZ via their C-terminal domains.

The protein localises to the cell inner membrane. Functionally, essential cell division protein that stabilizes the FtsZ protofilaments by cross-linking them and that serves as a cytoplasmic membrane anchor for the Z ring. Also required for the recruitment to the septal ring of downstream cell division proteins. The sequence is that of Cell division protein ZipA from Actinobacillus pleuropneumoniae serotype 5b (strain L20).